Reading from the N-terminus, the 455-residue chain is Bifunctional protein GlmU (455 aa).

The tract at residues 1 to 227 (MGLSVIILAA…CEEVQGVNDR (227 aa)) is pyrophosphorylase. Residues 8–11 (LAAG), Lys-22, Gln-73, 78–79 (GT), 100–102 (YGD), Gly-137, Glu-152, Asn-167, and Asn-225 contribute to the UDP-N-acetyl-alpha-D-glucosamine site. Residue Asp-102 participates in Mg(2+) binding. Residue Asn-225 coordinates Mg(2+). Residues 228-248 (WELTKLERYYQRLMAKKLSLA) form a linker region. The segment at 249–455 (GVTIIDPERF…KGWHRPTKKE (207 aa)) is N-acetyltransferase. UDP-N-acetyl-alpha-D-glucosamine is bound by residues Arg-332 and Lys-350. Catalysis depends on His-362, which acts as the Proton acceptor. UDP-N-acetyl-alpha-D-glucosamine is bound by residues Tyr-365 and Asn-376. Acetyl-CoA contacts are provided by residues Ala-379, 385–386 (NY), Ser-404, Ala-422, and Arg-439.

This sequence in the N-terminal section; belongs to the N-acetylglucosamine-1-phosphate uridyltransferase family. The protein in the C-terminal section; belongs to the transferase hexapeptide repeat family. As to quaternary structure, homotrimer. It depends on Mg(2+) as a cofactor.

Its subcellular location is the cytoplasm. The enzyme catalyses alpha-D-glucosamine 1-phosphate + acetyl-CoA = N-acetyl-alpha-D-glucosamine 1-phosphate + CoA + H(+). It carries out the reaction N-acetyl-alpha-D-glucosamine 1-phosphate + UTP + H(+) = UDP-N-acetyl-alpha-D-glucosamine + diphosphate. It participates in nucleotide-sugar biosynthesis; UDP-N-acetyl-alpha-D-glucosamine biosynthesis; N-acetyl-alpha-D-glucosamine 1-phosphate from alpha-D-glucosamine 6-phosphate (route II): step 2/2. The protein operates within nucleotide-sugar biosynthesis; UDP-N-acetyl-alpha-D-glucosamine biosynthesis; UDP-N-acetyl-alpha-D-glucosamine from N-acetyl-alpha-D-glucosamine 1-phosphate: step 1/1. Its pathway is bacterial outer membrane biogenesis; LPS lipid A biosynthesis. Its function is as follows. Catalyzes the last two sequential reactions in the de novo biosynthetic pathway for UDP-N-acetylglucosamine (UDP-GlcNAc). The C-terminal domain catalyzes the transfer of acetyl group from acetyl coenzyme A to glucosamine-1-phosphate (GlcN-1-P) to produce N-acetylglucosamine-1-phosphate (GlcNAc-1-P), which is converted into UDP-GlcNAc by the transfer of uridine 5-monophosphate (from uridine 5-triphosphate), a reaction catalyzed by the N-terminal domain. The chain is Bifunctional protein GlmU from Coxiella burnetii (strain Dugway 5J108-111).